Consider the following 189-residue polypeptide: Elongation factor P 2 (189 aa).

This sequence belongs to the elongation factor P family.

The protein resides in the cytoplasm. The protein operates within protein biosynthesis; polypeptide chain elongation. In terms of biological role, involved in peptide bond synthesis. Stimulates efficient translation and peptide-bond synthesis on native or reconstituted 70S ribosomes in vitro. Probably functions indirectly by altering the affinity of the ribosome for aminoacyl-tRNA, thus increasing their reactivity as acceptors for peptidyl transferase. This chain is Elongation factor P 2, found in Lactobacillus acidophilus (strain ATCC 700396 / NCK56 / N2 / NCFM).